The following is an 82-amino-acid chain: Myosin light chain alkali (82 aa).

The 36-residue stretch at glycine 7–asparagine 42 folds into the EF-hand domain.

In terms of assembly, myosin is a hexamer of 2 heavy chains and 4 light chains.

The protein is Myosin light chain alkali (Mlc1) of Drosophila teissieri (Fruit fly).